The chain runs to 143 residues: Transcriptional regulator MraZ (143 aa).

2 consecutive SpoVT-AbrB domains span residues 5–47 and 76–119; these read EFRH…PMKE and ATEC…DEAR.

The protein belongs to the MraZ family. Forms oligomers.

It is found in the cytoplasm. Its subcellular location is the nucleoid. The sequence is that of Transcriptional regulator MraZ from Enterococcus hirae.